We begin with the raw amino-acid sequence, 238 residues long: Probable xyloglucan-specific endo-beta-1,4-glucanase A (238 aa).

Positions 1-18 (MKLSLSVALSLAAATAQA) are cleaved as a signal peptide. 2 N-linked (GlcNAc...) asparagine glycosylation sites follow: Asn106 and Asn171.

This sequence belongs to the glycosyl hydrolase 12 (cellulase H) family.

The protein resides in the secreted. The enzyme catalyses xyloglucan + H2O = xyloglucan oligosaccharides.. Functionally, catalyzes endohydrolysis of 1,4-beta-D-glucosidic linkages in xyloglucan with retention of the beta-configuration of the glycosyl residues. Specific for xyloglucan and does not hydrolyze other cell wall components. The protein is Probable xyloglucan-specific endo-beta-1,4-glucanase A (xgeA) of Aspergillus fumigatus (strain CBS 144.89 / FGSC A1163 / CEA10) (Neosartorya fumigata).